A 335-amino-acid chain; its full sequence is Mycobacterial beta-ketoacyl-[acyl-carrier-protein] synthase III (335 aa).

Active-site residues include Cys-122 and His-258. Positions 259–263 (QANSR) are ACP-binding. Asn-289 is a catalytic residue.

This sequence belongs to the thiolase-like superfamily. FabH family. In terms of assembly, homodimer.

Its subcellular location is the cytoplasm. The enzyme catalyses malonyl-[ACP] + dodecanoyl-CoA + H(+) = 3-oxotetradecanoyl-[ACP] + CO2 + CoA. It participates in lipid metabolism; fatty acid biosynthesis. The protein operates within lipid metabolism; mycolic acid biosynthesis. Catalyzes the condensation reaction of fatty acid synthesis by the addition to an acyl acceptor of two carbons from malonyl-ACP. Catalyzes the first condensation reaction which initiates fatty acid synthesis and may therefore play a role in governing the total rate of fatty acid production. Possesses both acetoacetyl-ACP synthase and acetyl transacylase activities. Its substrate specificity determines the biosynthesis of branched-chain and/or straight-chain of fatty acids. In Mycobacterium ulcerans (strain Agy99), this protein is Mycobacterial beta-ketoacyl-[acyl-carrier-protein] synthase III.